Here is a 490-residue protein sequence, read N- to C-terminus: Aspartyl aminopeptidase 4 (490 aa).

Residue H97 participates in Zn(2+) binding. A substrate-binding site is contributed by H173. The Zn(2+) site is built by D273, E308, E309, and D362. Position 308 (E308) interacts with substrate. Substrate is bound by residues D362, H365, K390, and Y397. H456 contributes to the Zn(2+) binding site.

The protein belongs to the peptidase M18 family. As to quaternary structure, tetrahedron-shaped homododecamer built from six homodimers. It depends on Zn(2+) as a cofactor.

It is found in the cytoplasm. The protein localises to the vacuole lumen. The catalysed reaction is Release of an N-terminal aspartate or glutamate from a peptide, with a preference for aspartate.. The metalloproteases inhibitors EDTA and 1.10-phenanthroline both inhibit the activity, whereas bestatin, an inhibitor of most aminopeptidases, does not affect enzyme activity. Its function is as follows. Aspartyl aminopeptidase that contributes to peptide degradation both in the cytosol and the vacuole. Cells may respond to environmental conditions by changing the distributions of the cytosolic enzyme to the vacuole when cells need more active vacuolar degradation. The chain is Aspartyl aminopeptidase 4 (APE4) from Saccharomyces cerevisiae (strain ATCC 204508 / S288c) (Baker's yeast).